A 714-amino-acid chain; its full sequence is Delta-like protein 1 (714 aa).

The signal sequence occupies residues 1-17 (MGRRSALALAVVSALLC). Residues 18–537 (QVWSSGVFEL…VAAQGGSFPW (520 aa)) lie on the Extracellular side of the membrane. Residues 176 to 220 (FVCDEHYYGEGCSVFCRPRDDAFGHFTCGERGEKMCDPGWKGQYC) form the DSL domain. Cystine bridges form between C178/C187, C191/C203, C211/C220, C225/C236, C229/C242, C244/C253, C256/C267, C262/C273, C275/C284, C291/C303, C297/C313, C315/C324, C331/C342, C336/C351, C353/C362, C369/C380, C374/C390, C392/C401, C408/C419, C413/C428, C430/C439, C446/C457, C451/C466, C468/C477, C484/C495, C489/C504, and C506/C515. 3 EGF-like domains span residues 225 to 253 (CLPG…GRYC), 256 to 284 (CIRY…GLFC), and 291 to 324 (CTHH…GANC). In terms of domain architecture, EGF-like 4; calcium-binding spans 331–362 (CAPSPCRNGGSCTDLEDSYSCTCPPGFYGKVC). 2 EGF-like domains span residues 369–401 (CADG…GFNC) and 408–439 (CSSS…GRYC). The region spanning 446–477 (CASSPCANGGTCRDSVNDFSCTCPPGYTGRNC) is the EGF-like 7; calcium-binding domain. N-linked (GlcNAc...) asparagine glycosylation occurs at N476. Residues 484–515 (CEHAPCHNGATCHQRGQRYMCECAQGYGGANC) enclose the EGF-like 8 domain. The helical transmembrane segment at 538–560 (VAVCAGVVLVLLLLLGCAAVVVC) threads the bilayer. Topologically, residues 561–714 (VRLKLQKHQP…KDECVIATEV (154 aa)) are cytoplasmic. Residue K605 forms a Glycyl lysine isopeptide (Lys-Gly) (interchain with G-Cter in ubiquitin) linkage. A Phosphothreonine modification is found at T630. Basic and acidic residues predominate over residues 644-656 (ATVRDAHSKRDTK). Residues 644–690 (ATVRDAHSKRDTKCQSQGSVGEEKSTSTLRGGEVPDRKRPESVYSTS) form a disordered region. Residue S685 is modified to Phosphoserine; by PKB. A Phosphoserine modification is found at S688. Residues 711-714 (ATEV) are interaction with MAGI1.

As to quaternary structure, homodimer. Interacts with TJP1. Interacts with MAGI1 (via PDZ domain); forms a complex with CTNNB1 and CDH2 and promotes recruitment to the adherens junction and stabilization on the cell surface. Interacts with PSEN1; undergoes a presenilin-dependent gamma-secretase cleavage that releases a Dll1-intracellular form. Interacts with MFAP5. Interacts with MIB1. Interacts with NEURL1B; leads to ubiquitination. Interacts with NEURL1. Interacts with SYNJ2BP; enhances DLL1 protein stability, and promotes Notch signaling in endothelial cells. Interacts with MAGI1, MAGI2, MAGI3 and MPDZ. Interacts (via ubiquitin) with EPN1 (via IUM domain); binding with NOTCH1 attached to neighboring cell, promotes ligand ubiquitination and EPN1 interaction, leading to NECD transendocytosis and Notch signaling. Interacts with NOTCH1. In terms of processing, ubiquitinated by MIB (MIB1 or MIB2), leading to its endocytosis and subsequent degradation. Ubiquitinated; promotes recycling back to the plasma membrane and confers a strong affinity for NOTCH1. Mono- and multi-ubiquitinated. Multi-ubiquitination of Lys-605 by MIB1 promotes both cis and trans-interaction with NOTCH1, as well as activation of Notch signaling. Ubiquitinated by NEURL1B. Post-translationally, phosphorylated in a membrane association-dependent manner. Phosphorylation at Ser-688 requires the presence of Ser-685, whereas phosphorylation at Thr-630 and Ser-685 occur independently of the other sites. Phosphorylation is required for full ligand activity in vitro and affects surface presentation, ectodomain shedding, and endocytosis. O-fucosylated. Can be elongated to a disaccharide by MFNG.

Its subcellular location is the apical cell membrane. The protein localises to the cell junction. It is found in the adherens junction. It localises to the membrane raft. Its function is as follows. Transmembrane ligand protein of NOTCH1, NOTCH2 and NOTCH3 receptors that binds the extracellular domain (ECD) of Notch receptor in a cis and trans fashion manner. Following transinteraction, ligand cells produce mechanical force that depends of a clathrin-mediated endocytosis, requiring ligand ubiquitination, EPN1 interaction, and actin polymerisation; these events promote Notch receptor extracellular domain (NECD) transendocytosis and triggers Notch signaling through induction of cleavage, hyperphosphorylation, and nuclear accumulation of the intracellular domain of Notch receptors (NICD). Is required for embryonic development and maintenance of adult stem cells in many different tissues and immune systeme; the DLL1-induced Notch signaling is mediated through an intercellular communication that regulates cell lineage, cell specification, cell patterning and morphogenesis through effects on differentiation and proliferation. Plays a role in brain development at different level, namely by regulating neuronal differentiation of neural precursor cells via cell-cell interaction, most likely through the lateral inhibitory system in an endogenous level dependent-manner. During neocortex development, Dll1-Notch signaling transmission is mediated by dynamic interactions between intermediate neurogenic progenitors and radial glia; the cell-cell interactions are mediated via dynamic and transient elongation processes, likely to reactivate/maintain Notch activity in neighboring progenitors, and coordinate progenitor cell division and differentiation across radial and zonal boundaries. During cerebellar development, regulates Bergmann glial monolayer formation and its morphological maturation through a Notch signaling pathway. At the retina and spinal cord level, regulates neurogenesis by preventing the premature differentiation of neural progenitors and also by maintaining progenitors in spinal cord through Notch signaling pathway. Also controls neurogenesis of the neural tube in a progenitor domain-specific fashion along the dorsoventral axis. Maintains quiescence of neural stem cells and plays a role as a fate determinant that segregates asymmetrically to one daughter cell during neural stem cells mitosis, resulting in neuronal differentiation in Dll1-inheriting cell. Plays a role in immune systeme development, namely the development of all T-cells and marginal zone (MZ) B cells. Blocks the differentiation of progenitor cells into the B-cell lineage while promoting the emergence of a population of cells with the characteristics of a T-cell/NK-cell precursor. Also plays a role during muscle development. During early development, inhibits myoblasts differentiation from the medial dermomyotomal lip and later regulates progenitor cell differentiation. Directly modulates cell adhesion and basal lamina formation in satellite cells through Notch signaling. Maintains myogenic progenitors pool by suppressing differentiation through down-regulation of MYOD1 and is required for satellite cell homing and PAX7 expression. During craniofacial and trunk myogenesis suppresses differentiation of cranial mesoderm-derived and somite-derived muscle via MYOD1 regulation but in cranial mesoderm-derived progenitors, is neither required for satellite cell homing nor for PAX7 expression. Also plays a role during pancreatic cell development. During type B pancreatic cell development, may be involved in the initiation of proximodistal patterning in the early pancreatic epithelium. Stimulates multipotent pancreatic progenitor cells proliferation and pancreatic growth by maintaining HES1 expression and PTF1A protein levels. During fetal stages of development, is required to maintain arterial identity and the responsiveness of arterial endothelial cells for VEGFA through regulation of KDR activation and NRP1 expression. Controls sprouting angiogenesis and subsequent vertical branch formation through regulation on tip cell differentiation. Negatively regulates goblet cell differentiation in intestine and controls secretory fat commitment through lateral inhibition in small intestine. Plays a role during inner ear development; negatively regulates auditory hair cell differentiation. Plays a role during nephron development through Notch signaling pathway. Regulates growth, blood pressure and energy homeostasis. The polypeptide is Delta-like protein 1 (Dll1) (Rattus norvegicus (Rat)).